We begin with the raw amino-acid sequence, 42 residues long: Photosystem II reaction center protein J (42 aa).

Residues 10–30 (IPLWLVGTVVGTLALGLVALF) traverse the membrane as a helical segment.

Belongs to the PsbJ family. In terms of assembly, PSII is composed of 1 copy each of membrane proteins PsbA, PsbB, PsbC, PsbD, PsbE, PsbF, PsbH, PsbI, PsbJ, PsbK, PsbL, PsbM, PsbT, PsbX, PsbY, PsbZ, Psb30/Ycf12, at least 3 peripheral proteins of the oxygen-evolving complex and a large number of cofactors. It forms dimeric complexes.

Its subcellular location is the plastid. It localises to the chloroplast thylakoid membrane. Its function is as follows. One of the components of the core complex of photosystem II (PSII). PSII is a light-driven water:plastoquinone oxidoreductase that uses light energy to abstract electrons from H(2)O, generating O(2) and a proton gradient subsequently used for ATP formation. It consists of a core antenna complex that captures photons, and an electron transfer chain that converts photonic excitation into a charge separation. This is Photosystem II reaction center protein J from Oltmannsiellopsis viridis (Marine flagellate).